A 267-amino-acid polypeptide reads, in one-letter code: Ribosomal RNA small subunit methyltransferase A (267 aa).

Residues leucine 20, glycine 45, glutamate 68, aspartate 91, and asparagine 113 each contribute to the S-adenosyl-L-methionine site.

Belongs to the class I-like SAM-binding methyltransferase superfamily. rRNA adenine N(6)-methyltransferase family. RsmA subfamily.

The protein resides in the cytoplasm. The enzyme catalyses adenosine(1518)/adenosine(1519) in 16S rRNA + 4 S-adenosyl-L-methionine = N(6)-dimethyladenosine(1518)/N(6)-dimethyladenosine(1519) in 16S rRNA + 4 S-adenosyl-L-homocysteine + 4 H(+). In terms of biological role, specifically dimethylates two adjacent adenosines (A1518 and A1519) in the loop of a conserved hairpin near the 3'-end of 16S rRNA in the 30S particle. May play a critical role in biogenesis of 30S subunits. This Blochmanniella pennsylvanica (strain BPEN) protein is Ribosomal RNA small subunit methyltransferase A.